A 334-amino-acid chain; its full sequence is N-acetyl-gamma-glutamyl-phosphate reductase (334 aa).

The active site involves cysteine 154.

Belongs to the NAGSA dehydrogenase family. Type 1 subfamily.

The protein resides in the cytoplasm. The catalysed reaction is N-acetyl-L-glutamate 5-semialdehyde + phosphate + NADP(+) = N-acetyl-L-glutamyl 5-phosphate + NADPH + H(+). The protein operates within amino-acid biosynthesis; L-arginine biosynthesis; N(2)-acetyl-L-ornithine from L-glutamate: step 3/4. Functionally, catalyzes the NADPH-dependent reduction of N-acetyl-5-glutamyl phosphate to yield N-acetyl-L-glutamate 5-semialdehyde. This Buchnera aphidicola subsp. Schizaphis graminum (strain Sg) protein is N-acetyl-gamma-glutamyl-phosphate reductase.